Reading from the N-terminus, the 865-residue chain is Alanine--tRNA ligase (865 aa).

The Zn(2+) site is built by H556, H560, C660, and H664.

The protein belongs to the class-II aminoacyl-tRNA synthetase family. It depends on Zn(2+) as a cofactor.

It localises to the cytoplasm. The catalysed reaction is tRNA(Ala) + L-alanine + ATP = L-alanyl-tRNA(Ala) + AMP + diphosphate. Functionally, catalyzes the attachment of alanine to tRNA(Ala) in a two-step reaction: alanine is first activated by ATP to form Ala-AMP and then transferred to the acceptor end of tRNA(Ala). Also edits incorrectly charged Ser-tRNA(Ala) and Gly-tRNA(Ala) via its editing domain. This is Alanine--tRNA ligase from Vesicomyosocius okutanii subsp. Calyptogena okutanii (strain HA).